Reading from the N-terminus, the 350-residue chain is Glycolate oxidase subunit GlcE (350 aa).

An FAD-binding PCMH-type domain is found at 1–173; it reads MLRECDYSQA…TEISMKVLPR (173 aa).

The glycolate oxidase likely consists of three subunits, GlcD, GlcE and GlcF. Requires FAD as cofactor.

Its subcellular location is the cell inner membrane. It carries out the reaction glycolate + A = glyoxylate + AH2. The catalysed reaction is (R)-lactate + A = pyruvate + AH2. In vitro the glycolate oxidase activity is inhibited by the sulfhydryl inhibitors CuSO4 and PCMB, by KCN, but not by the metal complexing agent EDTA. Functionally, component of a complex that catalyzes the oxidation of glycolate to glyoxylate. Is required for E.coli to grow on glycolate as a sole source of carbon. Is also able to oxidize D-lactate ((R)-lactate) with a similar rate. Does not link directly to O(2), and 2,6-dichloroindophenol (DCIP) and phenazine methosulfate (PMS) can act as artificial electron acceptors in vitro, but the physiological molecule that functions as a primary electron acceptor during glycolate oxidation is unknown. The polypeptide is Glycolate oxidase subunit GlcE (Escherichia coli (strain K12)).